Consider the following 185-residue polypeptide: Ribosome-recycling factor (185 aa).

It belongs to the RRF family.

It is found in the cytoplasm. Functionally, responsible for the release of ribosomes from messenger RNA at the termination of protein biosynthesis. May increase the efficiency of translation by recycling ribosomes from one round of translation to another. The sequence is that of Ribosome-recycling factor from Pelobacter propionicus (strain DSM 2379 / NBRC 103807 / OttBd1).